The following is an 815-amino-acid chain: Probable receptor-like protein kinase At2g39360 (815 aa).

Residues 1 to 26 (MINLKLFLELKLCFLITLLCSSHISS) form the signal peptide. The Extracellular segment spans residues 27–407 (VSDTFFINCG…SSSNKSSNTS (381 aa)). N-linked (GlcNAc...) asparagine glycans are attached at residues asparagine 40, asparagine 45, asparagine 125, asparagine 146, asparagine 209, asparagine 244, asparagine 277, asparagine 331, asparagine 355, asparagine 401, and asparagine 405. The chain crosses the membrane as a helical span at residues 408–428 (VGLIAGLSAALCVALVFGVVV). The Cytoplasmic segment spans residues 429-815 (SWWCIRKRRR…FAQMVREETR (387 aa)). In terms of domain architecture, Protein kinase spans 487–761 (FDESLVIGVG…GDLLWNLEFM (275 aa)). Residues 493 to 501 (IGVGGFGKV) and lysine 515 each bind ATP. Residue aspartate 612 is the Proton acceptor of the active site.

The protein belongs to the protein kinase superfamily. Ser/Thr protein kinase family.

It is found in the cell membrane. The protein is Probable receptor-like protein kinase At2g39360 of Arabidopsis thaliana (Mouse-ear cress).